Consider the following 347-residue polypeptide: MRPIVLKGHERPLTQVKFNRDGDLVFACSKDSVASIWYAINGERLGTLDDHSGTIWSIDVDESTTYALTGGADFCFKIWKVATGVAVHSVSTRSPVLRVEFSPDGSKLLIVLDAVMGHIGSIVVYSLIRNENGEIVNVKEEPDYEITTIEQATKVFVASWSYNGKYIIAGHEDGQISAYYGENGEFVQAKKIHEKSIKDIQFSPDRTYFITSSRDSVASLVDVDTFEVLKTYKADCPLNSASITPLKEFVILGGGQDAKDVTTTSAREGKFEARIYHKVFQDEIGRVKGHFGPLNYVAVSPTGTSYASGGEDGYIRLHHFDKSYFDFKYDVEKTFEVERRQQLQKQE.

WD repeat units lie at residues G8–T47, D50–S89, E150–K190, I192–K233, and G289–K328.

Belongs to the eIF-3 subunit I family. Component of the eukaryotic translation initiation factor 3 (eIF-3) complex.

Its subcellular location is the cytoplasm. Its function is as follows. Component of the eukaryotic translation initiation factor 3 (eIF-3) complex, which is involved in protein synthesis of a specialized repertoire of mRNAs and, together with other initiation factors, stimulates binding of mRNA and methionyl-tRNAi to the 40S ribosome. The eIF-3 complex specifically targets and initiates translation of a subset of mRNAs involved in cell proliferation. In Kluyveromyces lactis (strain ATCC 8585 / CBS 2359 / DSM 70799 / NBRC 1267 / NRRL Y-1140 / WM37) (Yeast), this protein is Eukaryotic translation initiation factor 3 subunit I.